The primary structure comprises 1564 residues: Tetratricopeptide repeat protein 37 (1564 aa).

TPR repeat units lie at residues 6–39, 40–73, 75–110, 116–149, 237–271, 306–339, 420–453, 456–492, 493–527, 564–597, 598–631, 633–665, 678–713, 743–776, 861–894, 980–1013, 1020–1050, 1051–1084, and 1400–1433; these read VKAI…EKNN, YNAW…EPDQ, LAWQ…YRSS, YEIC…KEDE, IYPL…DPLN, PSAW…ATQD, AEGH…KPEN, YHYY…DPFM, SRAF…DDSD, KWAW…DPKD, SNCW…NPDS, YSVY…SGEY, MLAK…RPDL, LLGN…QSTA, VAAW…DPLY, RTAF…LQER, NSAL…PLTE, FDDL…AKSD, and HNAW…ASQQ.

In Xenopus laevis (African clawed frog), this protein is Tetratricopeptide repeat protein 37 (ttc37).